A 155-amino-acid polypeptide reads, in one-letter code: Putative pre-16S rRNA nuclease (155 aa).

Belongs to the YqgF nuclease family.

It localises to the cytoplasm. Functionally, could be a nuclease involved in processing of the 5'-end of pre-16S rRNA. In Paramagnetospirillum magneticum (strain ATCC 700264 / AMB-1) (Magnetospirillum magneticum), this protein is Putative pre-16S rRNA nuclease.